Reading from the N-terminus, the 358-residue chain is RuBisCO accumulation factor 1 (358 aa).

Residues 11–194 (VSAAEAAELI…RQAIEKLLTD (184 aa)) are N-terminal alpha-helix. Residues 218–344 (ARLIPVAGTF…VVLVLRPKKI (127 aa)) are C-terminal beta-sheet.

This sequence belongs to the RAF family. Homodimer. Forms an RbcL(8)-Raf1(8) complex. Forms complexes of many stoichiometries with RbcL with and without RbcS. RbcX and Raf1 can bind simultaneously to RbcL. Interacts with both RuBisCO subunits (ccbL, ccbS), GroEL, DnaK and alpha and beta phycocyanin (cpcA, cpcB) in pull-down experiments with tagged protein. C-terminally tagged Raf1 does not interact with either RuBisCO subunit, suggesting its C-terminus is involved in binding.

It localises to the cytoplasm. A major RuBisCO chaperone. Acts after GroEL-GroES chaperonin to fold and/or assemble the large subunit of RuBisCO (ccbL, rbcL). Cooperates with RbcX in RbcL folding, plays the major role in assembly of dimers into RbcL(8)-Raf1(8) intermediate complexes. RbcS replaces Raf1, leading to holoenzyme formation. Its function is as follows. Required for optimal reconstitution of RbcL(8) upon expression in E.coli. Has been suggested to be involved in RuBisCO recycling and homeostasis rather than assembly. The sequence is that of RuBisCO accumulation factor 1 from Synechocystis sp. (strain ATCC 27184 / PCC 6803 / Kazusa).